We begin with the raw amino-acid sequence, 260 residues long: MARLAAFDMDGTLLMPDHHLGEKTLSTLARLRERDITLTFATGRHALEMQHILGALSLDAYLITGNGTRVHSLEGELLHRDDLPADVAELVLYQQWDTRASMHIFNDDGWFTGKEIPALLQAFVYSGFRYQIIDVKKMPLGSVTKICFCGDHDDLTRLQIQLYEALGERAHLCFSATDCLEVLPVGCNKGAALTVLTQHLGLSLRDCMAFGDAMNDREMLGSVGSGFIMGNAMPQLRAELPHLPVIGHCRNQAVSHYLTH.

The active-site Nucleophile is aspartate 8. Mg(2+) is bound by residues aspartate 8, aspartate 10, and aspartate 212.

It belongs to the HAD-like hydrolase superfamily. Cof family. It depends on Mg(2+) as a cofactor.

It catalyses the reaction 4-amino-2-methyl-5-(diphosphooxymethyl)pyrimidine + H2O = 4-amino-2-methyl-5-(phosphooxymethyl)pyrimidine + phosphate + H(+). Catalyzes the hydrolysis of 4-amino-2-methyl-5-hydroxymethylpyrimidine pyrophosphate (HMP-PP) to 4-amino-2-methyl-5-hydroxymethylpyrimidine phosphate (HMP-P). In Shigella boydii serotype 4 (strain Sb227), this protein is HMP-PP phosphatase.